The chain runs to 85 residues: MQNDQGEIVDVYIPRKCSATNNILAAKDHASVQINMAEIDPQTGRMTGKQITYALCGELRRMGEADDSVNRLAMKDKMLSEVFGH.

It belongs to the eukaryotic ribosomal protein eS21 family. As to quaternary structure, component of the 40S small ribosomal subunit.

Its subcellular location is the cytoplasm. The protein resides in the cytosol. It localises to the rough endoplasmic reticulum. This chain is Small ribosomal subunit protein eS21 (rps-21), found in Pectinaria gouldii (Trumpet worm).